Consider the following 179-residue polypeptide: ATP synthase subunit delta (179 aa).

This sequence belongs to the ATPase delta chain family. As to quaternary structure, F-type ATPases have 2 components, F(1) - the catalytic core - and F(0) - the membrane proton channel. F(1) has five subunits: alpha(3), beta(3), gamma(1), delta(1), epsilon(1). F(0) has three main subunits: a(1), b(2) and c(10-14). The alpha and beta chains form an alternating ring which encloses part of the gamma chain. F(1) is attached to F(0) by a central stalk formed by the gamma and epsilon chains, while a peripheral stalk is formed by the delta and b chains.

It localises to the cell inner membrane. Its function is as follows. F(1)F(0) ATP synthase produces ATP from ADP in the presence of a proton or sodium gradient. F-type ATPases consist of two structural domains, F(1) containing the extramembraneous catalytic core and F(0) containing the membrane proton channel, linked together by a central stalk and a peripheral stalk. During catalysis, ATP synthesis in the catalytic domain of F(1) is coupled via a rotary mechanism of the central stalk subunits to proton translocation. Functionally, this protein is part of the stalk that links CF(0) to CF(1). It either transmits conformational changes from CF(0) to CF(1) or is implicated in proton conduction. The polypeptide is ATP synthase subunit delta (Bordetella petrii (strain ATCC BAA-461 / DSM 12804 / CCUG 43448)).